A 382-amino-acid chain; its full sequence is DNA replication and repair protein RecF (382 aa).

30–37 contributes to the ATP binding site; the sequence is GPNGHGKS.

The protein belongs to the RecF family.

Its subcellular location is the cytoplasm. Its function is as follows. The RecF protein is involved in DNA metabolism; it is required for DNA replication and normal SOS inducibility. RecF binds preferentially to single-stranded, linear DNA. It also seems to bind ATP. This chain is DNA replication and repair protein RecF, found in Magnetococcus marinus (strain ATCC BAA-1437 / JCM 17883 / MC-1).